Reading from the N-terminus, the 190-residue chain is Probable nicotinate-nucleotide adenylyltransferase (190 aa).

Belongs to the NadD family.

The enzyme catalyses nicotinate beta-D-ribonucleotide + ATP + H(+) = deamido-NAD(+) + diphosphate. The protein operates within cofactor biosynthesis; NAD(+) biosynthesis; deamido-NAD(+) from nicotinate D-ribonucleotide: step 1/1. Its function is as follows. Catalyzes the reversible adenylation of nicotinate mononucleotide (NaMN) to nicotinic acid adenine dinucleotide (NaAD). This Borrelia hermsii (strain HS1 / DAH) protein is Probable nicotinate-nucleotide adenylyltransferase.